Here is a 434-residue protein sequence, read N- to C-terminus: Gamma-glutamyl phosphate reductase (434 aa).

The protein belongs to the gamma-glutamyl phosphate reductase family.

It localises to the cytoplasm. The enzyme catalyses L-glutamate 5-semialdehyde + phosphate + NADP(+) = L-glutamyl 5-phosphate + NADPH + H(+). Its pathway is amino-acid biosynthesis; L-proline biosynthesis; L-glutamate 5-semialdehyde from L-glutamate: step 2/2. Its function is as follows. Catalyzes the NADPH-dependent reduction of L-glutamate 5-phosphate into L-glutamate 5-semialdehyde and phosphate. The product spontaneously undergoes cyclization to form 1-pyrroline-5-carboxylate. The sequence is that of Gamma-glutamyl phosphate reductase from Nostoc sp. (strain PCC 7120 / SAG 25.82 / UTEX 2576).